Consider the following 169-residue polypeptide: Succinate dehydrogenase cytochrome b560 subunit, mitochondrial (169 aa).

Residues 1–29 constitute a mitochondrion transit peptide; that stretch reads MAALLLRHVGRHCLRAHFSPQLCIRNAVP. The Mitochondrial matrix segment spans residues 30–65; the sequence is LGTTAKEEMERFWNKNIGSNRPLSPHITIYSWSLPM. Residues 66 to 90 traverse the membrane as a helical segment; that stretch reads AMSICHRGTGIALSAGVSLFGMSAL. Over 91-110 the chain is Mitochondrial intermembrane; it reads LLPGNFESYLELVKSLCLGP. A helical transmembrane segment spans residues 111–139; sequence ALIHTAKFALVFPLMYHTWNGIRHLMWDL. Residue H127 coordinates heme b. Residues 140–146 lie on the Mitochondrial matrix side of the membrane; it reads GKGLKIP. A helical membrane pass occupies residues 147 to 167; that stretch reads QLYQSGVVVLVLTVLSSMGLA. Topologically, residues 168 to 169 are mitochondrial intermembrane; the sequence is AM.

It belongs to the cytochrome b560 family. Component of complex II composed of four subunits: the flavoprotein (FP) SDHA, iron-sulfur protein (IP) SDHB, and a cytochrome b560 composed of SDHC and SDHD. It depends on heme b as a cofactor.

Its subcellular location is the mitochondrion inner membrane. The protein operates within carbohydrate metabolism; tricarboxylic acid cycle. Functionally, membrane-anchoring subunit of succinate dehydrogenase (SDH) that is involved in complex II of the mitochondrial electron transport chain and is responsible for transferring electrons from succinate to ubiquinone (coenzyme Q). SDH also oxidizes malate to the non-canonical enol form of oxaloacetate, enol-oxaloacetate. Enol-oxaloacetate, which is a potent inhibitor of the succinate dehydrogenase activity, is further isomerized into keto-oxaloacetate. In Homo sapiens (Human), this protein is Succinate dehydrogenase cytochrome b560 subunit, mitochondrial (SDHC).